Reading from the N-terminus, the 289-residue chain is Leucine--tRNA ligase subunit beta (289 aa).

A 'KMSKS' region motif is present at residues 45–49 (KMSKS). Lys-48 contributes to the ATP binding site.

Belongs to the class-I aminoacyl-tRNA synthetase family. In terms of assembly, seems to consist of an alpha chain and a beta chain.

It is found in the cytoplasm. It catalyses the reaction tRNA(Leu) + L-leucine + ATP = L-leucyl-tRNA(Leu) + AMP + diphosphate. This chain is Leucine--tRNA ligase subunit beta (leuS'), found in Aquifex aeolicus (strain VF5).